We begin with the raw amino-acid sequence, 740 residues long: ATP-dependent RNA helicase DDX1 (740 aa).

The segment at 1 to 295 (MAAFSEMGVM…APKALIVEPS (295 aa)) is necessary for interaction with HNRNPK. The segment at 1–448 (MAAFSEMGVM…DTVHHVVVPV (448 aa)) is interaction with dsRNA. A necessary for interaction with RELA region spans residues 1–525 (MAAFSEMGVM…KIDCDNLEQY (525 aa)). Residues 2–428 (AAFSEMGVMP…SEKIMHFPTW (427 aa)) enclose the Helicase ATP-binding domain. Residue 46–53 (AETGSGKT) participates in ATP binding. Positions 70-247 (DQQEGKKGKA…LKFNFGEEEF (178 aa)) constitute a B30.2/SPRY domain. Lys239 and Lys268 each carry N6-acetyllysine. Lys281 is modified (N6-acetyllysine; alternate). Residue Lys281 forms a Glycyl lysine isopeptide (Lys-Gly) (interchain with G-Cter in SUMO2); alternate linkage. The DEAD box signature appears at 370–373 (DEAD). A Phosphoserine modification is found at Ser481. Positions 493–681 (KGEYAVRAIK…QVEPDIKVPV (189 aa)) constitute a Helicase C-terminal domain. Positions 525–740 (YFMQQGGGPD…YLPNQLFRTF (216 aa)) are necessary for interaction with HNRNPK.

Belongs to the DEAD box helicase family. DDX1 subfamily. Found in a multi-helicase-TICAM1 complex at least composed of DHX36, DDX1, DDX21 and TICAM1; this complex exists in resting cells with or without poly(I:C) RNA ligand stimulation. Interacts with DHX36. Interacts (via B30.2/SPRY domain) with DDX21 (via N-terminus); this interaction serves as bridges to TICAM1. Interacts with FAM98A (via N- and C-terminus). Interacts with PHF5A (via C-terminus). Interacts with MBNL1. Interacts with CSTF2. Interacts with HNRNPK. Interacts with ATM. Interacts with RELA (via C-terminus). Component of the tRNA-splicing ligase complex. Interacts with PQBP1. Interacts with ERCC6. Post-translationally, phosphorylated by ATM kinase; phosphorylation is increased in response to ionizing radiation (IR).

The protein localises to the nucleus. It is found in the cytoplasm. It localises to the cytoplasmic granule. Its subcellular location is the cytosol. The protein resides in the mitochondrion. The enzyme catalyses ATP + H2O = ADP + phosphate + H(+). Functionally, acts as an ATP-dependent RNA helicase, able to unwind both RNA-RNA and RNA-DNA duplexes. Possesses 5' single-stranded RNA overhang nuclease activity. Possesses ATPase activity on various RNA, but not DNA polynucleotides. May play a role in RNA clearance at DNA double-strand breaks (DSBs), thereby facilitating the template-guided repair of transcriptionally active regions of the genome. Together with RELA, acts as a coactivator to enhance NF-kappa-B-mediated transcriptional activation. Acts as a positive transcriptional regulator of cyclin CCND2 expression. Binds to the cyclin CCND2 promoter region. Associates with chromatin at the NF-kappa-B promoter region via association with RELA. Binds to poly(A) RNA. May be involved in 3'-end cleavage and polyadenylation of pre-mRNAs. Component of the tRNA-splicing ligase complex required to facilitate the enzymatic turnover of catalytic subunit RTCB: together with archease (ZBTB8OS), acts by facilitating the guanylylation of RTCB, a key intermediate step in tRNA ligation. Component of a multi-helicase-TICAM1 complex that acts as a cytoplasmic sensor of viral double-stranded RNA (dsRNA) and plays a role in the activation of a cascade of antiviral responses including the induction of pro-inflammatory cytokines via the adapter molecule TICAM1. Specifically binds (via helicase ATP-binding domain) on both short and long poly(I:C) dsRNA. The protein is ATP-dependent RNA helicase DDX1 (Ddx1) of Rattus norvegicus (Rat).